Consider the following 194-residue polypeptide: Peptidyl-tRNA hydrolase (194 aa).

Tyr-17 provides a ligand contact to tRNA. The active-site Proton acceptor is the His-22. The tRNA site is built by Phe-68, Asn-70, and Asn-116.

It belongs to the PTH family. Monomer.

It localises to the cytoplasm. It carries out the reaction an N-acyl-L-alpha-aminoacyl-tRNA + H2O = an N-acyl-L-amino acid + a tRNA + H(+). Functionally, hydrolyzes ribosome-free peptidyl-tRNAs (with 1 or more amino acids incorporated), which drop off the ribosome during protein synthesis, or as a result of ribosome stalling. Its function is as follows. Catalyzes the release of premature peptidyl moieties from peptidyl-tRNA molecules trapped in stalled 50S ribosomal subunits, and thus maintains levels of free tRNAs and 50S ribosomes. This is Peptidyl-tRNA hydrolase from Shewanella sediminis (strain HAW-EB3).